A 69-amino-acid polypeptide reads, in one-letter code: Beta-defensin 1 (69 aa).

The signal sequence occupies residues 1–21 (MKTHYFLLVMICFLFSQMEPG). Positions 22–32 (VGILTSLGRRT) are excised as a propeptide. 3 disulfides stabilise this stretch: Cys-37-Cys-66, Cys-44-Cys-59, and Cys-49-Cys-67.

This sequence belongs to the beta-defensin family. As to quaternary structure, monomer. Homodimer. In terms of tissue distribution, detected in kidney.

It is found in the secreted. It localises to the membrane. Its function is as follows. Has bactericidal activity. May act as a ligand for C-C chemokine receptor CCR6. Positively regulates the sperm motility and bactericidal activity in a CCR6-dependent manner. Binds to CCR6 and triggers Ca2+ mobilization in the sperm which is important for its motility. The sequence is that of Beta-defensin 1 (Defb1) from Mus musculus (Mouse).